The primary structure comprises 94 residues: Progonadoliberin-3 (94 aa).

A signal peptide spans 1–23; the sequence is MEGKGRVLVQLLMLACVLEVSLC. Gln24 bears the Pyrrolidone carboxylic acid mark. Gly33 carries the glycine amide modification.

It belongs to the GnRH family.

It localises to the secreted. Stimulates the secretion of gonadotropins. The polypeptide is Progonadoliberin-3 (gnrh3) (Carassius auratus (Goldfish)).